Consider the following 198-residue polypeptide: Recombination protein RecR (198 aa).

The C4-type zinc finger occupies 57–72 (CEKCNTFTEAQICEVC). Positions 80–175 (TLLCVVETPA…AVTRLARGVP (96 aa)) constitute a Toprim domain.

It belongs to the RecR family.

Functionally, may play a role in DNA repair. It seems to be involved in an RecBC-independent recombinational process of DNA repair. It may act with RecF and RecO. This is Recombination protein RecR from Burkholderia vietnamiensis (strain G4 / LMG 22486) (Burkholderia cepacia (strain R1808)).